Here is a 239-residue protein sequence, read N- to C-terminus: uncharacterized protein (239 aa).

7 helical membrane-spanning segments follow: residues 20-40 (ILIW…WLVL), 48-68 (FSSV…LGLL), 80-100 (WILL…GFHF), 106-126 (IYAM…TYLF), 143-163 (LILL…EILV), 164-184 (MIAG…DILH), and 192-212 (IPGA…VLYF).

The protein belongs to the cytomegalovirus US12 family.

Its subcellular location is the membrane. This is an uncharacterized protein from Homo sapiens (Human).